A 335-amino-acid chain; its full sequence is tRNA-dihydrouridine(20/20a) synthase (335 aa).

Residues proline 20–leucine 22 and glutamine 72 each bind FMN. Cysteine 102 serves as the catalytic Proton donor. Residues lysine 141, histidine 173, asparagine 213 to glycine 215, and glycine 235 to arginine 236 contribute to the FMN site.

This sequence belongs to the Dus family. DusA subfamily. Requires FMN as cofactor.

It carries out the reaction 5,6-dihydrouridine(20) in tRNA + NADP(+) = uridine(20) in tRNA + NADPH + H(+). It catalyses the reaction 5,6-dihydrouridine(20) in tRNA + NAD(+) = uridine(20) in tRNA + NADH + H(+). The enzyme catalyses 5,6-dihydrouridine(20a) in tRNA + NADP(+) = uridine(20a) in tRNA + NADPH + H(+). The catalysed reaction is 5,6-dihydrouridine(20a) in tRNA + NAD(+) = uridine(20a) in tRNA + NADH + H(+). Catalyzes the synthesis of 5,6-dihydrouridine (D), a modified base found in the D-loop of most tRNAs, via the reduction of the C5-C6 double bond in target uridines. Specifically modifies U20 and U20a in tRNAs. In Shewanella oneidensis (strain ATCC 700550 / JCM 31522 / CIP 106686 / LMG 19005 / NCIMB 14063 / MR-1), this protein is tRNA-dihydrouridine(20/20a) synthase.